The chain runs to 200 residues: Large ribosomal subunit protein bL25 (200 aa).

The segment at 1 to 20 (MEARELKANVRKESGKEQAR) is disordered.

The protein belongs to the bacterial ribosomal protein bL25 family. CTC subfamily. Part of the 50S ribosomal subunit; part of the 5S rRNA/L5/L18/L25 subcomplex. Contacts the 5S rRNA. Binds to the 5S rRNA independently of L5 and L18.

Functionally, this is one of the proteins that binds to the 5S RNA in the ribosome where it forms part of the central protuberance. In Syntrophus aciditrophicus (strain SB), this protein is Large ribosomal subunit protein bL25.